A 304-amino-acid chain; its full sequence is Acetylglutamate kinase (304 aa).

Residues 77–78 (GG), R99, and N193 each bind substrate.

Belongs to the acetylglutamate kinase family. ArgB subfamily.

Its subcellular location is the cytoplasm. The catalysed reaction is N-acetyl-L-glutamate + ATP = N-acetyl-L-glutamyl 5-phosphate + ADP. Its pathway is amino-acid biosynthesis; L-arginine biosynthesis; N(2)-acetyl-L-ornithine from L-glutamate: step 2/4. In terms of biological role, catalyzes the ATP-dependent phosphorylation of N-acetyl-L-glutamate. This chain is Acetylglutamate kinase, found in Pelodictyon phaeoclathratiforme (strain DSM 5477 / BU-1).